Here is a 95-residue protein sequence, read N- to C-terminus: MSIKPLHDRIVVKPIEADEVSPGGIVIPDSAKEKSTKGEVIAVGTGKPLDNGNVRTPSIKVGDKVIYGQYAGSTYKAEGVEYKVLREDDILAIIG.

This sequence belongs to the GroES chaperonin family. Heptamer of 7 subunits arranged in a ring. Interacts with the chaperonin GroEL.

The protein localises to the cytoplasm. Its function is as follows. Together with the chaperonin GroEL, plays an essential role in assisting protein folding. The GroEL-GroES system forms a nano-cage that allows encapsulation of the non-native substrate proteins and provides a physical environment optimized to promote and accelerate protein folding. GroES binds to the apical surface of the GroEL ring, thereby capping the opening of the GroEL channel. This Xylella fastidiosa (strain M12) protein is Co-chaperonin GroES.